We begin with the raw amino-acid sequence, 39 residues long: Cytochrome b6-f complex subunit 5 (39 aa).

A helical membrane pass occupies residues 5–25 (LLCGIVLGLVPITLLGLFVSA).

The protein belongs to the PetG family. The 4 large subunits of the cytochrome b6-f complex are cytochrome b6, subunit IV (17 kDa polypeptide, PetD), cytochrome f and the Rieske protein, while the 4 small subunits are PetG, PetL, PetM and PetN. The complex functions as a dimer.

It is found in the cellular thylakoid membrane. In terms of biological role, component of the cytochrome b6-f complex, which mediates electron transfer between photosystem II (PSII) and photosystem I (PSI), cyclic electron flow around PSI, and state transitions. PetG is required for either the stability or assembly of the cytochrome b6-f complex. The polypeptide is Cytochrome b6-f complex subunit 5 (Prochlorococcus marinus (strain MIT 9301)).